The primary structure comprises 143 residues: Large ribosomal subunit protein uL16 (143 aa).

It belongs to the universal ribosomal protein uL16 family. As to quaternary structure, part of the 50S ribosomal subunit.

Binds 23S rRNA and is also seen to make contacts with the A and possibly P site tRNAs. In Caulobacter vibrioides (strain ATCC 19089 / CIP 103742 / CB 15) (Caulobacter crescentus), this protein is Large ribosomal subunit protein uL16.